The following is a 211-amino-acid chain: Thymidylate kinase (211 aa).

10-17 is a binding site for ATP; that stretch reads GVEGCGKT.

It belongs to the thymidylate kinase family.

It carries out the reaction dTMP + ATP = dTDP + ADP. Phosphorylation of dTMP to form dTDP in both de novo and salvage pathways of dTTP synthesis. The protein is Thymidylate kinase of Nostoc sp. (strain PCC 7120 / SAG 25.82 / UTEX 2576).